We begin with the raw amino-acid sequence, 287 residues long: Protein REVEILLE 3 (287 aa).

The region spanning 56 to 110 is the HTH myb-type domain; that stretch reads TITKSRENWTEQEHDKFLEALHLFDRDWKKIKAFVGSKTVIQIRSHAQKYFLKVQ. A DNA-binding region (H-T-H motif) is located at residues 83-106; sequence WKKIKAFVGSKTVIQIRSHAQKYF. The interval 111-135 is disordered; the sequence is KNGTKEHLPPPRPKRKANHPYPQKA.

Its subcellular location is the nucleus. In terms of biological role, probable transcription factor. The chain is Protein REVEILLE 3 (RVE3) from Arabidopsis thaliana (Mouse-ear cress).